The primary structure comprises 201 residues: Retinol-binding protein 4 (201 aa).

The N-terminal stretch at 1–18 (MEWVWALVLLAALGSGRG) is a signal peptide. 3 cysteine pairs are disulfide-bonded: cysteine 22–cysteine 178, cysteine 88–cysteine 192, and cysteine 138–cysteine 147. Glutamine 116 is a substrate binding site. Arginine 139 carries the post-translational modification Omega-N-methylarginine.

The protein belongs to the calycin superfamily. Lipocalin family. In terms of assembly, interacts with TTR. Interaction with TTR prevents its loss by filtration through the kidney glomeruli. Interacts with STRA6.

The protein resides in the secreted. Its function is as follows. Retinol-binding protein that mediates retinol transport in blood plasma. Delivers retinol from the liver stores to the peripheral tissues. Transfers the bound all-trans retinol to STRA6, that then facilitates retinol transport across the cell membrane. The polypeptide is Retinol-binding protein 4 (RBP4) (Oryctolagus cuniculus (Rabbit)).